Here is a 456-residue protein sequence, read N- to C-terminus: MLNNAMSVVILAAGKGTRMYSDLPKVLHTLAGKAMVQHVIDAANELGAAHVHLVYGHGGDLLKQALKDDNLNWVLQAEQLGTGHAMQQAAPFFADDEDILMLYGDVPLISVETLQRLRDAKPQGGIGLLTVKLDDPTGYGRITRENGKVTGIVEHKDATDEQRQIQEINTGILIANGADMKRWLAKLTNNNAQGEYYITDIIALAYQEGREIVAVHPQRLSEVEGVNNRLQLSRLERVYQFEQAEKLLLAGVMLRDPARFDLRGTLTHGRDVEIDTNVIIEGNVTLGHRVKIGTGCVIKNSVIGDDCEISPYTVVEDANLAAACTIGPFARLRPGAELLEGAHVGNFVEMKKARLGKGSKAGHLTYLGDAEVGDNVNIGAGTITCNYDGANKFKTIIGDDVFVGSDTQLVAPVTVGKGATIAAGTTVTRNVGENALAISRVPQSQKEGWRRPVKKK.

Residues 1-229 (MLNNAMSVVI…LSEVEGVNNR (229 aa)) form a pyrophosphorylase region. UDP-N-acetyl-alpha-D-glucosamine-binding positions include 11 to 14 (LAAG), Lys25, Gln76, 81 to 82 (GT), 103 to 105 (YGD), Gly140, Glu154, Asn169, and Asn227. Residue Asp105 coordinates Mg(2+). A Mg(2+)-binding site is contributed by Asn227. Positions 230 to 250 (LQLSRLERVYQFEQAEKLLLA) are linker. Residues 251 to 456 (GVMLRDPARF…EGWRRPVKKK (206 aa)) form an N-acetyltransferase region. UDP-N-acetyl-alpha-D-glucosamine is bound by residues Arg333 and Lys351. His363 serves as the catalytic Proton acceptor. Residues Tyr366 and Asn377 each coordinate UDP-N-acetyl-alpha-D-glucosamine. Residues Ala380, 386 to 387 (NY), Ser405, Ala423, and Arg440 each bind acetyl-CoA.

The protein in the N-terminal section; belongs to the N-acetylglucosamine-1-phosphate uridyltransferase family. It in the C-terminal section; belongs to the transferase hexapeptide repeat family. In terms of assembly, homotrimer. Mg(2+) serves as cofactor.

The protein resides in the cytoplasm. The catalysed reaction is alpha-D-glucosamine 1-phosphate + acetyl-CoA = N-acetyl-alpha-D-glucosamine 1-phosphate + CoA + H(+). It carries out the reaction N-acetyl-alpha-D-glucosamine 1-phosphate + UTP + H(+) = UDP-N-acetyl-alpha-D-glucosamine + diphosphate. Its pathway is nucleotide-sugar biosynthesis; UDP-N-acetyl-alpha-D-glucosamine biosynthesis; N-acetyl-alpha-D-glucosamine 1-phosphate from alpha-D-glucosamine 6-phosphate (route II): step 2/2. It functions in the pathway nucleotide-sugar biosynthesis; UDP-N-acetyl-alpha-D-glucosamine biosynthesis; UDP-N-acetyl-alpha-D-glucosamine from N-acetyl-alpha-D-glucosamine 1-phosphate: step 1/1. It participates in bacterial outer membrane biogenesis; LPS lipid A biosynthesis. Its function is as follows. Catalyzes the last two sequential reactions in the de novo biosynthetic pathway for UDP-N-acetylglucosamine (UDP-GlcNAc). The C-terminal domain catalyzes the transfer of acetyl group from acetyl coenzyme A to glucosamine-1-phosphate (GlcN-1-P) to produce N-acetylglucosamine-1-phosphate (GlcNAc-1-P), which is converted into UDP-GlcNAc by the transfer of uridine 5-monophosphate (from uridine 5-triphosphate), a reaction catalyzed by the N-terminal domain. The polypeptide is Bifunctional protein GlmU (Escherichia coli O7:K1 (strain IAI39 / ExPEC)).